We begin with the raw amino-acid sequence, 756 residues long: 1,4-alpha-glucan branching enzyme GlgB (756 aa).

The active-site Nucleophile is Asp-431. Glu-484 (proton donor) is an active-site residue.

Belongs to the glycosyl hydrolase 13 family. GlgB subfamily. Monomer.

The enzyme catalyses Transfers a segment of a (1-&gt;4)-alpha-D-glucan chain to a primary hydroxy group in a similar glucan chain.. Its pathway is glycan biosynthesis; glycogen biosynthesis. Catalyzes the formation of the alpha-1,6-glucosidic linkages in glycogen by scission of a 1,4-alpha-linked oligosaccharide from growing alpha-1,4-glucan chains and the subsequent attachment of the oligosaccharide to the alpha-1,6 position. This is 1,4-alpha-glucan branching enzyme GlgB from Prochlorococcus marinus (strain MIT 9303).